The primary structure comprises 129 residues: L-ectoine synthase (129 aa).

This sequence belongs to the ectoine synthase family.

It carries out the reaction (2S)-4-acetamido-2-aminobutanoate = L-ectoine + H2O. It participates in amine and polyamine biosynthesis; ectoine biosynthesis; L-ectoine from L-aspartate 4-semialdehyde: step 3/3. Catalyzes the circularization of gamma-N-acetyl-alpha,gamma-diaminobutyric acid (ADABA) to ectoine (1,4,5,6-tetrahydro-2-methyl-4-pyrimidine carboxylic acid), which is an excellent osmoprotectant. In Mycobacterium sp. (strain KMS), this protein is L-ectoine synthase.